We begin with the raw amino-acid sequence, 341 residues long: THO complex subunit 6 homolog (341 aa).

WD repeat units follow at residues 22–61 (RLHM…SSEA), 74–112 (AHDG…GCKE), 124–163 (LEVP…FTRA), 166–205 (GHTD…EVQT), 215–254 (SRPH…PTTV), 256–293 (PIRA…KAQV), and 295–339 (GSSP…AFSL). Ser180 bears the Phosphoserine mark.

It belongs to the WD repeat THOC6 family. Component of the THO subcomplex, which is composed of THOC1, THOC2, THOC3, THOC5, THOC6 and THOC7. The THO subcomplex interacts with DDX39B to form the THO-DDX39B complex which multimerizes into a 28-subunit tetrameric assembly. Component of the transcription/export (TREX) complex at least composed of ALYREF/THOC4, DDX39B, SARNP/CIP29, CHTOP and the THO subcomplex; in the complex interacts with THOC5; together with THOC5 and THOC7, plays a key structural role in the oligomerization of the THO-DDX39B complex. TREX seems to have a dynamic structure involving ATP-dependent remodeling.

The protein localises to the nucleus. The protein resides in the nucleus speckle. In terms of biological role, component of the THO subcomplex of the TREX complex which is thought to couple mRNA transcription, processing and nuclear export, and which specifically associates with spliced mRNA and not with unspliced pre-mRNA. Plays a key structural role in the oligomerization of the THO-DDX39B complex. TREX is recruited to spliced mRNAs by a transcription-independent mechanism, binds to mRNA upstream of the exon-junction complex (EJC) and is recruited in a splicing- and cap-dependent manner to a region near the 5' end of the mRNA where it functions in mRNA export to the cytoplasm via the TAP/NXF1 pathway. Plays a role in apoptosis negative control involved in brain development. This is THO complex subunit 6 homolog (Thoc6) from Rattus norvegicus (Rat).